The following is a 577-amino-acid chain: Proline--tRNA ligase (577 aa).

It belongs to the class-II aminoacyl-tRNA synthetase family. ProS type 1 subfamily. In terms of assembly, homodimer.

Its subcellular location is the cytoplasm. The catalysed reaction is tRNA(Pro) + L-proline + ATP = L-prolyl-tRNA(Pro) + AMP + diphosphate. Its function is as follows. Catalyzes the attachment of proline to tRNA(Pro) in a two-step reaction: proline is first activated by ATP to form Pro-AMP and then transferred to the acceptor end of tRNA(Pro). As ProRS can inadvertently accommodate and process non-cognate amino acids such as alanine and cysteine, to avoid such errors it has two additional distinct editing activities against alanine. One activity is designated as 'pretransfer' editing and involves the tRNA(Pro)-independent hydrolysis of activated Ala-AMP. The other activity is designated 'posttransfer' editing and involves deacylation of mischarged Ala-tRNA(Pro). The misacylated Cys-tRNA(Pro) is not edited by ProRS. This Helicobacter pylori (strain P12) protein is Proline--tRNA ligase.